A 237-amino-acid chain; its full sequence is Ribonuclease PH (237 aa).

Phosphate-binding positions include R86 and 124–126 (GTR).

It belongs to the RNase PH family. Homohexameric ring arranged as a trimer of dimers.

The enzyme catalyses tRNA(n+1) + phosphate = tRNA(n) + a ribonucleoside 5'-diphosphate. In terms of biological role, phosphorolytic 3'-5' exoribonuclease that plays an important role in tRNA 3'-end maturation. Removes nucleotide residues following the 3'-CCA terminus of tRNAs; can also add nucleotides to the ends of RNA molecules by using nucleoside diphosphates as substrates, but this may not be physiologically important. Probably plays a role in initiation of 16S rRNA degradation (leading to ribosome degradation) during starvation. This is Ribonuclease PH from Methylorubrum extorquens (strain CM4 / NCIMB 13688) (Methylobacterium extorquens).